The primary structure comprises 255 residues: Ribosomal RNA small subunit methyltransferase G 2 (255 aa).

Residues glycine 90, phenylalanine 95, and arginine 155 each contribute to the S-adenosyl-L-methionine site. Over residues 233 to 245 the composition is skewed to acidic residues; the sequence is EDEGEELLMDELS. The segment at 233 to 255 is disordered; that stretch reads EDEGEELLMDELSNEEKRRWAKY. Positions 246–255 are enriched in basic and acidic residues; it reads NEEKRRWAKY.

It belongs to the methyltransferase superfamily. RNA methyltransferase RsmG family.

Its subcellular location is the cytoplasm. The enzyme catalyses guanosine(527) in 16S rRNA + S-adenosyl-L-methionine = N(7)-methylguanosine(527) in 16S rRNA + S-adenosyl-L-homocysteine. Specifically methylates the N7 position of guanine in position 527 of 16S rRNA. This Bdellovibrio bacteriovorus (strain ATCC 15356 / DSM 50701 / NCIMB 9529 / HD100) protein is Ribosomal RNA small subunit methyltransferase G 2.